The primary structure comprises 1038 residues: Bone morphogenetic protein receptor type-2 (1038 aa).

An N-terminal signal peptide occupies residues 1–26 (MTSSLQRPWRVPWLPWTILLVSTAAA). The Extracellular portion of the chain corresponds to 27–150 (SQNQERLCAF…PPHSFNRDET (124 aa)). Disulfide bonds link cysteine 34–cysteine 66, cysteine 60–cysteine 84, cysteine 94–cysteine 117, cysteine 99–cysteine 116, and cysteine 118–cysteine 123. An N-linked (GlcNAc...) asparagine glycan is attached at asparagine 55. Residue asparagine 110 is glycosylated (N-linked (GlcNAc...) asparagine). N-linked (GlcNAc...) asparagine glycosylation occurs at asparagine 126. A helical membrane pass occupies residues 151–171 (IIIALASVSVLAVLIVALCFG). Residues 172–1038 (YRMLTGDRKQ…VSKDIGMNCL (867 aa)) are Cytoplasmic-facing. A Protein kinase domain is found at 203–504 (LKLLELIGRG…QCAEERMAEL (302 aa)). ATP-binding positions include 209-217 (IGRGRYGAV), lysine 230, and 280-282 (EYY). The active-site Proton acceptor is the aspartate 333. ATP contacts are provided by residues 337-338 (RN) and aspartate 351. The residue at position 379 (threonine 379) is a Phosphothreonine. Position 586 is a phosphoserine (serine 586). A disordered region spans residues 593–626 (QAQARIPSPETSVTSLSTNTTTTNTTGLTPSTGM). Residues 603 to 626 (TSVTSLSTNTTTTNTTGLTPSTGM) show a composition bias toward low complexity. Phosphoserine occurs at positions 680 and 681. Disordered regions lie at residues 746–770 (PKQQ…KEPR) and 872–972 (RREQ…EKIK). Over residues 872 to 896 (RREQQAGHDEGVLDRLVDRRERPLE) the composition is skewed to basic and acidic residues. A compositionally biased stretch (polar residues) spans 937 to 964 (RPNSLDLSATNVLDGSSIQIGESTQDGK).

It belongs to the protein kinase superfamily. TKL Ser/Thr protein kinase family. TGFB receptor subfamily. Interacts with GDF5. Interacts with BMP4. Interacts with SCUBE3. Interacts with TSC22D1/TSC-22. Interacts with activin A/INHBA. Mg(2+) is required as a cofactor. Mn(2+) serves as cofactor. Highly expressed in heart and liver.

It is found in the cell membrane. It catalyses the reaction L-threonyl-[receptor-protein] + ATP = O-phospho-L-threonyl-[receptor-protein] + ADP + H(+). The enzyme catalyses L-seryl-[receptor-protein] + ATP = O-phospho-L-seryl-[receptor-protein] + ADP + H(+). On ligand binding, forms a receptor complex consisting of two type II and two type I transmembrane serine/threonine kinases. Type II receptors phosphorylate and activate type I receptors which autophosphorylate, then bind and activate SMAD transcriptional regulators. Can also mediate signaling through the activation of the p38MAPK cascade. Binds to BMP7, BMP2 and, less efficiently, BMP4. Binding is weak but enhanced by the presence of type I receptors for BMPs. Mediates induction of adipogenesis by GDF6. Promotes signaling also by binding to activin A/INHBA. The protein is Bone morphogenetic protein receptor type-2 (BMPR2) of Homo sapiens (Human).